The primary structure comprises 512 residues: Gustatory and odorant receptor 63a (512 aa).

A disordered region spans residues 1 to 24; that stretch reads MRPSGEKVVKGHGQGNSGHSLSGM. Residues 1-129 are Cytoplasmic-facing; sequence MRPSGEKVVK…PARAKFEMNS (129 aa). The helical transmembrane segment at 130–150 threads the bilayer; sequence ASFIYSVVFFVLLACYVGYVA. At 151 to 166 the chain is on the extracellular side; that stretch reads NNRIHIVRSLSGPFEE. Residues 167–187 form a helical membrane-spanning segment; it reads AVIAYLFLVNILPIMIIPILW. Residues 188–222 lie on the Cytoplasmic side of the membrane; that stretch reads YEARKIAKLFNDWDDFEVLYYQISGHSLPLKLRQK. Residues 223 to 243 form a helical membrane-spanning segment; it reads AVYIAIVLPILSVLSVVITHV. Over 244 to 265 the chain is Extracellular; the sequence is TMSDLNINQVVPYCILDNLTAM. The N-linked (GlcNAc...) asparagine glycan is linked to N261. The chain crosses the membrane as a helical span at residues 266 to 285; the sequence is LGAWWFLICEAMSITAHLLA. Residues 286 to 324 lie on the Cytoplasmic side of the membrane; the sequence is ERFQKALKHIGPAAMVADYRVLWLRLSKLTRDTGNALCY. A helical membrane pass occupies residues 325 to 345; that stretch reads TFVFMSLYLFFIITLSIYGLM. Residues 346–350 lie on the Extracellular side of the membrane; it reads SQLSE. Residues 351-371 form a helical membrane-spanning segment; that stretch reads GFGIKDIGLTITALWNIGLLF. At 372–436 the chain is on the cytoplasmic side; the sequence is YICDEAHYAS…FFDVNRTLFK (65 aa). Residues 437 to 457 form a helical membrane-spanning segment; that stretch reads GLLTTMVTYLVVLLQFQISIP. The Extracellular portion of the chain corresponds to 458–512; that stretch reads TDKGDSEGANNITVVDFVMDSLDNDMSLMGASTLSTTTVGTTLPPPIMKLKGRKG. The N-linked (GlcNAc...) asparagine glycan is linked to N468.

This sequence belongs to the insect chemoreceptor superfamily. Gustatory receptor (GR) family. Gr21a subfamily. Gr21a and Gr63a probably form a heterodimer that responds to CO(2). In terms of tissue distribution, expressed in the medial aspect of the third antennal segment. Carbon dioxide-responsive neurons coexpress Gr21a and Gr63a in a pair of chemosensory receptors at both larval and adult life stages.

It localises to the cell membrane. In terms of biological role, gustatory and odorant receptor which mediates acceptance or avoidance behavior, depending on its substrates. Gr21a and Gr63a together are sufficient for carbon dioxide detection and avoidance behavior. It is possible that the CO(2) receptors Gr63a and Gr21a activate the TRPC channels through Galpha49B and Plc21C. This innate olfactory avoidance behavior can be inhibited by inhibitory interactions of the odors such as 1-hexanol and 2,3-butanedione with Gr21a and Gr63a. The protein is Gustatory and odorant receptor 63a (Gr63a) of Drosophila melanogaster (Fruit fly).